The chain runs to 404 residues: Argininosuccinate synthase (404 aa).

Residues 10–18 (AYSGGLDTS) and alanine 37 each bind ATP. Tyrosine 90 and serine 95 together coordinate L-citrulline. Glycine 120 contributes to the ATP binding site. L-aspartate contacts are provided by threonine 122, asparagine 126, and aspartate 127. L-citrulline is bound at residue asparagine 126. The L-citrulline site is built by arginine 130, serine 180, serine 189, glutamate 265, and tyrosine 277.

This sequence belongs to the argininosuccinate synthase family. Type 1 subfamily. Homotetramer.

Its subcellular location is the cytoplasm. It catalyses the reaction L-citrulline + L-aspartate + ATP = 2-(N(omega)-L-arginino)succinate + AMP + diphosphate + H(+). It functions in the pathway amino-acid biosynthesis; L-arginine biosynthesis; L-arginine from L-ornithine and carbamoyl phosphate: step 2/3. The polypeptide is Argininosuccinate synthase (Helicobacter hepaticus (strain ATCC 51449 / 3B1)).